The following is a 901-amino-acid chain: Protein translocase subunit SecA (901 aa).

Residues Q85, 103 to 107 (GEGKT), and D510 contribute to the ATP site. Over residues 836-845 (EEAERARQEM) the composition is skewed to basic and acidic residues. Positions 836-901 (EEAERARQEM…HCHGSRVARQ (66 aa)) are disordered. Over residues 849–866 (INQNNLPVDENSQTTQNS) the composition is skewed to polar residues. Residues C882, C884, C893, and H894 each contribute to the Zn(2+) site. A compositionally biased stretch (basic residues) spans 888–901 (KKYKHCHGSRVARQ).

The protein belongs to the SecA family. Monomer and homodimer. Part of the essential Sec protein translocation apparatus which comprises SecA, SecYEG and auxiliary proteins SecDF-YajC and YidC. Zn(2+) is required as a cofactor.

It is found in the cell inner membrane. The protein localises to the cytoplasm. The catalysed reaction is ATP + H2O + cellular proteinSide 1 = ADP + phosphate + cellular proteinSide 2.. Part of the Sec protein translocase complex. Interacts with the SecYEG preprotein conducting channel. Has a central role in coupling the hydrolysis of ATP to the transfer of proteins into and across the cell membrane, serving both as a receptor for the preprotein-SecB complex and as an ATP-driven molecular motor driving the stepwise translocation of polypeptide chains across the membrane. This chain is Protein translocase subunit SecA, found in Haemophilus influenzae (strain PittEE).